The primary structure comprises 95 residues: Large ribosomal subunit protein bL25 (95 aa).

The protein belongs to the bacterial ribosomal protein bL25 family. In terms of assembly, part of the 50S ribosomal subunit; part of the 5S rRNA/L5/L18/L25 subcomplex. Contacts the 5S rRNA. Binds to the 5S rRNA independently of L5 and L18.

Its function is as follows. This is one of the proteins that binds to the 5S RNA in the ribosome where it forms part of the central protuberance. The chain is Large ribosomal subunit protein bL25 from Haemophilus ducreyi (strain 35000HP / ATCC 700724).